A 77-amino-acid polypeptide reads, in one-letter code: Fungal protease inhibitor F (77 aa).

An N-terminal signal peptide occupies residues 1–22 (MASKNLFVLFFIFALFAANIAA). Cystine bridges form between Cys-25–Cys-57, Cys-36–Cys-49, Cys-40–Cys-77, and Cys-59–Cys-71.

The protein belongs to the protease inhibitor I40 family. In terms of tissue distribution, hemolymph.

The protein localises to the secreted. Highly specific for fungal protease and subtilisin. The polypeptide is Fungal protease inhibitor F (Bombyx mori (Silk moth)).